Here is a 206-residue protein sequence, read N- to C-terminus: Ribonuclease HII (206 aa).

An RNase H type-2 domain is found at 19–206 (ALIAGVDEVG…GPVKRALGIE (188 aa)). Residues Asp25, Glu26, and Asp117 each coordinate a divalent metal cation.

The protein belongs to the RNase HII family. It depends on Mn(2+) as a cofactor. Mg(2+) is required as a cofactor.

It is found in the cytoplasm. It catalyses the reaction Endonucleolytic cleavage to 5'-phosphomonoester.. Its function is as follows. Endonuclease that specifically degrades the RNA of RNA-DNA hybrids. The chain is Ribonuclease HII from Vibrio cholerae serotype O1 (strain M66-2).